A 190-amino-acid polypeptide reads, in one-letter code: dCTP deaminase (190 aa).

113 to 118 (KSTYAR) provides a ligand contact to dCTP. The active-site Proton donor/acceptor is Glu-139. DCTP contacts are provided by Gln-158, Tyr-172, Lys-181, and Gln-182.

This sequence belongs to the dCTP deaminase family. Homotrimer.

The enzyme catalyses dCTP + H2O + H(+) = dUTP + NH4(+). It functions in the pathway pyrimidine metabolism; dUMP biosynthesis; dUMP from dCTP (dUTP route): step 1/2. In terms of biological role, catalyzes the deamination of dCTP to dUTP. The polypeptide is dCTP deaminase (Chlamydia caviae (strain ATCC VR-813 / DSM 19441 / 03DC25 / GPIC) (Chlamydophila caviae)).